The following is a 29-amino-acid chain: Galanin (29 aa).

The residue at position 29 (alanine 29) is an Alanine amide.

This sequence belongs to the galanin family.

It localises to the secreted. Contracts smooth muscle of the gastrointestinal and genitourinary tract, regulates growth hormone release, modulates insulin release, and may be involved in the control of adrenal secretion. The sequence is that of Galanin (gal) from Pelophylax ridibundus (Marsh frog).